We begin with the raw amino-acid sequence, 217 residues long: Probable GTP-binding protein EngB (217 aa).

The EngB-type G domain maps to 37 to 214; it reads DGVEIAFAGR…RAAMAKLLEE (178 aa). Residues 45–52, 72–76, 92–95, 159–162, and 193–195 each bind GTP; these read GRSNVGKS, GRTQE, DMPG, TKAD, and TSS. Mg(2+) contacts are provided by Ser52 and Thr74.

It belongs to the TRAFAC class TrmE-Era-EngA-EngB-Septin-like GTPase superfamily. EngB GTPase family. Mg(2+) serves as cofactor.

Functionally, necessary for normal cell division and for the maintenance of normal septation. The polypeptide is Probable GTP-binding protein EngB (Bradyrhizobium diazoefficiens (strain JCM 10833 / BCRC 13528 / IAM 13628 / NBRC 14792 / USDA 110)).